A 407-amino-acid chain; its full sequence is NADH-quinone oxidoreductase subunit D (407 aa).

This sequence belongs to the complex I 49 kDa subunit family. As to quaternary structure, NDH-1 is composed of 14 different subunits. Subunits NuoB, C, D, E, F, and G constitute the peripheral sector of the complex.

The protein localises to the cell inner membrane. It catalyses the reaction a quinone + NADH + 5 H(+)(in) = a quinol + NAD(+) + 4 H(+)(out). Its function is as follows. NDH-1 shuttles electrons from NADH, via FMN and iron-sulfur (Fe-S) centers, to quinones in the respiratory chain. The immediate electron acceptor for the enzyme in this species is believed to be ubiquinone. Couples the redox reaction to proton translocation (for every two electrons transferred, four hydrogen ions are translocated across the cytoplasmic membrane), and thus conserves the redox energy in a proton gradient. The polypeptide is NADH-quinone oxidoreductase subunit D (Roseobacter denitrificans (strain ATCC 33942 / OCh 114) (Erythrobacter sp. (strain OCh 114))).